We begin with the raw amino-acid sequence, 245 residues long: MPATNLVGLDLVGIGHRYRDTTVLHDIDLTVEPGEFVSFLGPSGVGKSTLLRIIAGLEQPTHGVVESTGGTSGGTMSRMMFQEDRLLPWRNVLDNVQLGTRHQRERALELLYDVGLAGREKDWPSELSGGQRQRVALARALLHQPDVLLLDEPFGALDAITRVAMQQLLERVLAEQPRTVLLVTHDVEEALVLSDRVLLLTDQGITRDLRIPHARPRHRGDAQLAAWKEELLDGLLQADNALSSL.

One can recognise an ABC transporter domain in the interval leucine 9–tryptophan 227. Glycine 41–serine 48 contacts ATP.

Belongs to the ABC transporter superfamily. Aliphatic sulfonates importer (TC 3.A.1.17.2) family. As to quaternary structure, the complex is composed of two ATP-binding proteins (SsuB), two transmembrane proteins (SsuC) and a solute-binding protein (SsuA).

It localises to the cell membrane. It carries out the reaction ATP + H2O + aliphatic sulfonate-[sulfonate-binding protein]Side 1 = ADP + phosphate + aliphatic sulfonateSide 2 + [sulfonate-binding protein]Side 1.. In terms of biological role, part of the ABC transporter complex SsuABC involved in aliphatic sulfonates import. Responsible for energy coupling to the transport system. In Rhodococcus jostii (strain RHA1), this protein is Aliphatic sulfonates import ATP-binding protein SsuB 1.